The primary structure comprises 199 residues: RNA pyrophosphohydrolase (199 aa).

One can recognise a Nudix hydrolase domain in the interval 6–154; sequence GYRPNVGIVL…KREVYELALS (149 aa). The Nudix box motif lies at 38–59; it reads GGIQHGESPEQAMYRELHEEVG.

It belongs to the Nudix hydrolase family. RppH subfamily. A divalent metal cation serves as cofactor.

In terms of biological role, accelerates the degradation of transcripts by removing pyrophosphate from the 5'-end of triphosphorylated RNA, leading to a more labile monophosphorylated state that can stimulate subsequent ribonuclease cleavage. This is RNA pyrophosphohydrolase from Polynucleobacter asymbioticus (strain DSM 18221 / CIP 109841 / QLW-P1DMWA-1) (Polynucleobacter necessarius subsp. asymbioticus).